The sequence spans 410 residues: Cysteine desulfurase (410 aa).

At K227 the chain carries N6-(pyridoxal phosphate)lysine. C365 serves as the catalytic Cysteine persulfide intermediate.

This sequence belongs to the class-V pyridoxal-phosphate-dependent aminotransferase family. Csd subfamily. Homodimer. Interacts with SufE and the SufBCD complex composed of SufB, SufC and SufD. The interaction with SufE is required to mediate the direct transfer of the sulfur atom from the S-sulfanylcysteine. Pyridoxal 5'-phosphate serves as cofactor.

Its subcellular location is the cytoplasm. It carries out the reaction (sulfur carrier)-H + L-cysteine = (sulfur carrier)-SH + L-alanine. The enzyme catalyses L-selenocysteine + AH2 = hydrogenselenide + L-alanine + A + H(+). It functions in the pathway cofactor biosynthesis; iron-sulfur cluster biosynthesis. Functionally, cysteine desulfurases mobilize the sulfur from L-cysteine to yield L-alanine, an essential step in sulfur metabolism for biosynthesis of a variety of sulfur-containing biomolecules. Component of the suf operon, which is activated and required under specific conditions such as oxidative stress and iron limitation. Acts as a potent selenocysteine lyase in vitro, that mobilizes selenium from L-selenocysteine. Selenocysteine lyase activity is however unsure in vivo. The sequence is that of Cysteine desulfurase from Wigglesworthia glossinidia brevipalpis.